A 60-amino-acid chain; its full sequence is Pepsin A (60 aa).

Residues 1–45 constitute a propeptide, activation peptide; that stretch reads FIIKVPLVKKKSLRKNLKEHGLLKDFLKKHSPNPASKYFPQEAAV.

Belongs to the peptidase A1 family.

Its subcellular location is the secreted. The catalysed reaction is Preferential cleavage: hydrophobic, preferably aromatic, residues in P1 and P1' positions. Cleaves 1-Phe-|-Val-2, 4-Gln-|-His-5, 13-Glu-|-Ala-14, 14-Ala-|-Leu-15, 15-Leu-|-Tyr-16, 16-Tyr-|-Leu-17, 23-Gly-|-Phe-24, 24-Phe-|-Phe-25 and 25-Phe-|-Tyr-26 bonds in the B chain of insulin.. In terms of biological role, shows particularly broad specificity; although bonds involving phenylalanine and leucine are preferred, many others are also cleaved to some extent. The polypeptide is Pepsin A (PGA) (Ursus thibetanus (Asiatic black bear)).